The sequence spans 71 residues: Pre-hexon-linking protein VIII (71 aa).

Belongs to the adenoviridae hexon-linking protein family. Interacts with the peripentonal hexons as well as the hexons in the facets. Part of a complex composed of the core-capsid bridging protein, the endosome lysis protein VI and the hexon-linking protein VIII; these interactions bridge the virus core to the capsid. In terms of processing, cleaved by the viral protease during virion maturation. May cause the middle segment to be shed from the capsid.

The protein resides in the host nucleus. It is found in the virion. Structural component of the virion that acts as a cement protein on the capsid interior and which glue the peripentonal hexons and group-of-nine hexons together. This chain is Pre-hexon-linking protein VIII, found in Canine adenovirus serotype 1 (strain Glaxo) (CAdV-1).